An 895-amino-acid polypeptide reads, in one-letter code: Zinc finger protein 281 (895 aa).

Disordered regions lie at residues 1–44 (MKIG…EMEP) and 63–113 (FTRP…AFPS). K2 is covalently cross-linked (Glycyl lysine isopeptide (Lys-Gly) (interchain with G-Cter in SUMO2)). Positions 7-36 (FLSGGGGTGSSGGSGSGGGGSGGGGGGGSS) are enriched in gly residues. Glycyl lysine isopeptide (Lys-Gly) (interchain with G-Cter in SUMO2) cross-links involve residues R65, K101, and K128. Basic and acidic residues-rich tracts occupy residues 130–140 (EKPADPEEQQS) and 202–218 (RTDD…DTNV). 2 disordered regions span residues 130 to 149 (EKPA…HHHY) and 183 to 253 (HVQQ…EGAI). Residues K213, K219, K225, K232, K242, and K259 each participate in a glycyl lysine isopeptide (Lys-Gly) (interchain with G-Cter in SUMO2) cross-link. 3 C2H2-type zinc fingers span residues 261–283 (HICD…VLIH), 289–311 (FQCS…EKIH), and 317–339 (FGCD…KRTH). Glycyl lysine isopeptide (Lys-Gly) (interchain with G-Cter in SUMO2) cross-links involve residues K301 and K325. Residues 345 to 367 (YKCDTCQQYFSRTDRLLKHRRTC) form a C2H2-type 4; atypical zinc finger. K373 is covalently cross-linked (Glycyl lysine isopeptide (Lys-Gly) (interchain with G-Cter in SUMO2)). The tract at residues 377-427 (SAEPGSSNHTNMGNLAVLSQGNTSSSRRKTKSKSIAIENKEQKTGKTNESQ) is disordered. Residues 379–398 (EPGSSNHTNMGNLAVLSQGN) show a composition bias toward polar residues. S395 carries the phosphoserine modification. Glycyl lysine isopeptide (Lys-Gly) (interchain with G-Cter in SUMO2) cross-links involve residues K409, K416, K460, and K477. S484 carries the post-translational modification Phosphoserine. Glycyl lysine isopeptide (Lys-Gly) (interchain with G-Cter in SUMO2) cross-links involve residues K493, K498, K539, K599, K617, and K622. The interval 638 to 660 (SGEHSELVQEENLSPGTQTPSND) is disordered. Residues 648-660 (ENLSPGTQTPSND) show a composition bias toward polar residues. S651 carries the post-translational modification Phosphoserine. Glycyl lysine isopeptide (Lys-Gly) (interchain with G-Cter in SUMO2) cross-links involve residues K661 and K670. Residues 778–789 (SSAFQSSSQKLT) show a composition bias toward polar residues. The interval 778–817 (SSAFQSSSQKLTSQKEQKNLESSTGFQIPSQELASQIDPQ) is disordered. S785 is subject to Phosphoserine. Residues K787, K792, and K795 each participate in a glycyl lysine isopeptide (Lys-Gly) (interchain with G-Cter in SUMO2) cross-link. The segment covering 797–815 (LESSTGFQIPSQELASQID) has biased composition (polar residues). Position 807 is a phosphoserine (S807). Glycyl lysine isopeptide (Lys-Gly) (interchain with G-Cter in SUMO2) cross-links involve residues K818 and K840. T888 carries the phosphothreonine modification.

It belongs to the krueppel C2H2-type zinc-finger protein family.

It is found in the nucleus. Its function is as follows. Transcription repressor that plays a role in regulation of embryonic stem cells (ESCs) differentiation. Required for ESCs differentiation and acts by mediating autorepression of NANOG in ESCs: binds to the NANOG promoter and promotes association of NANOG protein to its own promoter and recruits the NuRD complex, which deacetylates histones. Not required for establishement and maintenance of ESCs. Represses the transcription of a number of genes including GAST, ODC1 and VIM. Binds to the G-rich box in the enhancer region of these genes. This is Zinc finger protein 281 (ZNF281) from Homo sapiens (Human).